The sequence spans 327 residues: Ribose-phosphate pyrophosphokinase (327 aa).

ATP is bound by residues 46–48 and 105–106; these read NGE and RQ. Residues H139 and D179 each contribute to the Mg(2+) site. The active site involves K203. Residues R205, D231, and 235–239 each bind D-ribose 5-phosphate; that span reads DTGGT.

This sequence belongs to the ribose-phosphate pyrophosphokinase family. Class I subfamily. As to quaternary structure, homohexamer. Requires Mg(2+) as cofactor.

The protein resides in the cytoplasm. The enzyme catalyses D-ribose 5-phosphate + ATP = 5-phospho-alpha-D-ribose 1-diphosphate + AMP + H(+). It participates in metabolic intermediate biosynthesis; 5-phospho-alpha-D-ribose 1-diphosphate biosynthesis; 5-phospho-alpha-D-ribose 1-diphosphate from D-ribose 5-phosphate (route I): step 1/1. Involved in the biosynthesis of the central metabolite phospho-alpha-D-ribosyl-1-pyrophosphate (PRPP) via the transfer of pyrophosphoryl group from ATP to 1-hydroxyl of ribose-5-phosphate (Rib-5-P). This Mycobacterium leprae (strain TN) protein is Ribose-phosphate pyrophosphokinase.